The sequence spans 562 residues: AT-rich interactive domain-containing protein 1 (562 aa).

Residues 43–136 (KELISLFRPL…YLDAFGRWLN (94 aa)) enclose the ARID domain. An ELM2 domain is found at 358–448 (PCALVGSKFQ…KLELGPAFYM (91 aa)).

The protein localises to the nucleus. The protein is AT-rich interactive domain-containing protein 1 (ARID1) of Arabidopsis thaliana (Mouse-ear cress).